Consider the following 702-residue polypeptide: Arylphorin subunit alpha (702 aa).

The signal sequence occupies residues 1-16 (MKTVVILAGLVALALS). Asparagine 75 and asparagine 214 each carry an N-linked (GlcNAc...) asparagine glycan.

This sequence belongs to the hemocyanin family. In terms of assembly, arylphorin is a hexamer of subunits alpha and beta. Fat body.

The protein resides in the secreted. It is found in the extracellular space. Functionally, arylphorin is a larval storage protein (LSP) which may serve as a storage protein used primarily as a source of aromatic amino acids for protein synthesis during metamorphosis. It is a constituent of the sclerotizing system of the cuticle, and serves as a carrier for ecdysteroid hormone. The sequence is that of Arylphorin subunit alpha from Manduca sexta (Tobacco hawkmoth).